Consider the following 1460-residue polypeptide: MYNPYQQQGMGYQQQQQQQQQQPNGFYPQQQQGQSSNQPQGQPQPQQQMAFNQPQATGIGGMPQSFGNSFSTMPQQPQTGYNNNGNNGSVYGNGNFGQQPQQQQQQVKPQHTGYVPNSSMPMMNTTGTMPPPNPAQQPQLQSIQPQGTGYYQSANTANVHSVQPLQSQGTGYYVSTPNLISSNQTQQPLQAQGTGYYQSQPQQVPPPQQAQSLQPLKPQQTGFYLQPQNQAPLEPLKPTATGFVNSFANNGLNNDIKIPAIRLSFITAQDQAKFETLFRSIVTNGSNTVSGANCRKILMRSGLPPSQLARIWTLCDTSKAGELLFPEFALAMHLINDVLQGDTIPYELDSKTKNEVSSFIDAINLSIANQDSSANDAPKTPFDEFITAGVQNLQPQPTGYMPQTSFGIPLQSQITGGGVASALNPQSTGFMAPTTFNMSMNTGTPGLNPQITGGAPASMQPNITGNALQPQTTGMMPQTTGMMPQTSFGVNLGPQLTGGALQSQYTGGYGSVMPQQSGPASMPNLSFNQQGLQSQLTGLQPQPTGFLPPSNFSATMPLTAQKTGFGNNEIYTKSNFGNNLIDNSSQDKISTEEKSLFYKFLKLLILKTKVVRFPHCCGNFRKSGLNRADLEQIWNLCDINNTGQLNKQEFALGMHLVYGKLNGKPIPNVLPSSLIPSSTKLLDNLKNQLKTEPTTTKEKPSFGKIDALSYKNNDDDVLPNYRNRRKVYSAKNEEQSSFSSPSAKSVNHSSSTLQTDDISVDKTVEKKTAKPKYSGFSREINLKNIASLENEIKNISNPENCYDNSIPSDLTSRFDAIIAKLPNLFNEISTIDNEITNAKIQLYRKKNPSSIIGSGPNGEITENDRKKAKSRALLRARMSALTGKSTESEDSLSMEDEQQSAEIKRIQQENGKNQEIIKDIRSSISDISASLKSTMTGSNMISNQEFERWEFGIGLEDGVREFLDDLKSNSNKSVTESSPFVPSSTPTPVDDRSSSPSYSQFKTAEERAAYLKEQAKKRMKEKLAKFDKNRRNVTQSSRSISSENSREQPQQIAGSSNLVEPRATPFQEEKYVEVAQPTQPVQSTQPVQPTQPVQPTQPVQPTQPVQNVYNAKQESDDEDEDDEEKRLQEELKRLKLKKKADKEKRLAALRKQIEDAQNESDEEETNGKDNFGGHVNVPQAAPVAPSAAFSQNSTNAPRSVHAAVTPAAGKNSTGLPSTTMGHNPYFKDASASSTSTFDARAAEMQRRIQRGLDEDEDDGWSDEDESNNRVAVDNKVEEAKIGHPDHARAPPVTAAPLPSVTPVPPAVPVPQANTSNEKSSPIPIAPIPPSVTQEPPVPLAPPLPAVDGFQEPPIPSAPAIATAVQKSGSSTPALAGGVLPPPPPLPTQQASTSEPIIAHVDNYNGAEKGTGAYGSDSDDDVLSIPESVGTDEEEEGAQPVSTAGIPSIPPAGIPPPPPLP.

The span at 1-56 (MYNPYQQQGMGYQQQQQQQQQQPNGFYPQQQQGQSSNQPQGQPQPQQQMAFNQPQA) shows a compositional bias: low complexity. A disordered region spans residues 1–151 (MYNPYQQQGM…SIQPQGTGYY (151 aa)). The span at 65–79 (SFGNSFSTMPQQPQT) shows a compositional bias: polar residues. Low complexity-rich tracts occupy residues 80 to 110 (GYNNNGNNGSVYGNGNFGQQPQQQQQQVKPQ), 117 to 128 (NSSMPMMNTTGT), and 136 to 146 (QQPQLQSIQPQ). A run of 5 repeats spans residues 142-153 (SIQPQGTGYYQS), 164-175 (PLQSQGTGYYVS), 188-199 (PLQAQGTGYYQS), 215-226 (PLKPQQTGFYLQ), and 235-246 (PLKPTATGFVNS). Positions 142 to 568 (SIQPQGTGYY…TAQKTGFGNN (427 aa)) are 15 X 12 AA tandem repeats of [SPNAG]-[IL]-[QKNGT]-[PSA]-[QT]-[GQAPISTLYK]-T-G-[YFGML]-[YVMGAQL]-[QVLNPAG]-[ASQPN]. Polar residues predominate over residues 185 to 197 (TQQPLQAQGTGYY). Residues 185–214 (TQQPLQAQGTGYYQSQPQQVPPPQQAQSLQ) are disordered. The residue at position 241 (threonine 241) is a Phosphothreonine. 2 consecutive EF-hand domains span residues 269–304 (QDQAKFETLFRSIVTNGSNTVSGANCRKILMRSGLP) and 306–338 (SQLARIWTLCDTSKAGELLFPEFALAMHLINDV). In terms of domain architecture, EH 1 spans 270 to 359 (DQAKFETLFR…SKTKNEVSSF (90 aa)). 11 consecutive repeat copies span residues 328 to 350 (FALAMHLINDVLQGDTIPYELDS), 392 to 403 (NLQPQPTGYMPQ), 409 to 420 (PLQSQITGGGVA), 422 to 433 (ALNPQSTGFMAP), 446 to 457 (GLNPQITGGAPA), 467 to 478 (ALQPQTTGMMPQ), 491 to 502 (NLGPQLTGGALQ), 503 to 511 (SQYTGGYGS), 531 to 541 (GLQSQLTGLQP), 542 to 549 (QPTGFLPP), and 557 to 568 (PLTAQKTGFGNN). A 2 X 23 AA repeats of F-A-L-[AG]-M-H-L-[IV]-[NY]-[DG]-[VK]-L-[QN]-G-[DK]-[TP]-I-P-[YN]-[EV]-L-[DP]-S region spans residues 328 to 672 (FALAMHLIND…GKPIPNVLPS (345 aa)). Threonine 563 bears the Phosphothreonine mark. The 89-residue stretch at 593 to 681 (EKSLFYKFLK…SSLIPSSTKL (89 aa)) folds into the EH 2 domain. The region spanning 625–660 (LNRADLEQIWNLCDINNTGQLNKQEFALGMHLVYGK) is the EF-hand 3 domain. Ca(2+)-binding residues include aspartate 638, asparagine 640, threonine 642, glutamine 644, and glutamate 649. One copy of the 2-2 repeat lies at 650–672 (FALGMHLVYGKLNGKPIPNVLPS). 4 disordered regions span residues 729 to 758 (SAKNEEQSSFSSPSAKSVNHSSSTLQTDDI), 880 to 901 (ALTGKSTESEDSLSMEDEQQSA), 969 to 1127 (NSNK…EKRL), and 1149 to 1460 (LRKQ…PPLP). Residues 735-757 (QSSFSSPSAKSVNHSSSTLQTDD) show a composition bias toward polar residues. Phosphoserine is present on residues serine 739 and serine 749. A compositionally biased stretch (acidic residues) spans 888–899 (SEDSLSMEDEQQ). Residues 973–988 (SVTESSPFVPSSTPTP) show a composition bias toward low complexity. Threonine 985 and threonine 987 each carry phosphothreonine. Serine 995 carries the post-translational modification Phosphoserine. Basic and acidic residues predominate over residues 1003–1030 (TAEERAAYLKEQAKKRMKEKLAKFDKNR). Residues 1048-1058 (QPQQIAGSSNL) show a composition bias toward polar residues. 5 tandem repeats follow at residues 1076-1081 (QPTQPV), 1082-1087 (QSTQPV), 1088-1093 (QPTQPV), 1094-1099 (QPTQPV), and 1100-1105 (QPTQPV). The 5 X 6 AA tandem repeats of Q-[PS]-T-Q-P-V stretch occupies residues 1076–1105 (QPTQPVQSTQPVQPTQPVQPTQPVQPTQPV). A compositionally biased stretch (low complexity) spans 1076 to 1106 (QPTQPVQSTQPVQPTQPVQPTQPVQPTQPVQ). The stretch at 1111–1170 (AKQESDDEDEDDEEKRLQEELKRLKLKKKADKEKRLAALRKQIEDAQNESDEEETNGKDN) forms a coiled coil. Serine 1160 carries the post-translational modification Phosphoserine. The span at 1175–1188 (VNVPQAAPVAPSAA) shows a compositional bias: low complexity. Polar residues predominate over residues 1210–1221 (KNSTGLPSTTMG). Residues 1228–1239 (DASASSTSTFDA) are compositionally biased toward low complexity. Residues serine 1230 and serine 1233 each carry the phosphoserine modification. Residues 1240 to 1252 (RAAEMQRRIQRGL) are compositionally biased toward basic and acidic residues. Positions 1253–1265 (DEDEDDGWSDEDE) are enriched in acidic residues. Serine 1261 is subject to Phosphoserine. The span at 1272 to 1288 (VDNKVEEAKIGHPDHAR) shows a compositional bias: basic and acidic residues. Residues 1289–1298 (APPVTAAPLP) show a composition bias toward low complexity. 8 consecutive repeat copies span residues 1295-1300 (APLPSV), 1301-1306 (TPVPPA), 1307-1312 (VPVPQA), 1320-1325 (SPIPIA), 1326-1330 (PIPPS), 1335-1340 (PPVPLA), 1341-1346 (PPLPAV), and 1352-1357 (PPIPSA). The 8 X 6 AA repeats of [ATVSP]-P-[LVI]-P-[SPQILA]-[VAS] stretch occupies residues 1295 to 1357 (APLPSVTPVP…GFQEPPIPSA (63 aa)). 2 stretches are compositionally biased toward pro residues: residues 1299-1308 (SVTPVPPAVP) and 1323-1344 (PIAPIPPSVTQEPPVPLAPPLP). A Phosphothreonine modification is found at threonine 1301. A compositionally biased stretch (pro residues) spans 1447 to 1460 (SIPPAGIPPPPPLP).

Belongs to the PAN1 family. As to quaternary structure, component of the PAN1 actin cytoskeleton-regulatory complex. Phosphorylated by PRK1 on threonine residues in the L-x-x-Q-x-T-G motif of repeats 1-6 to 1-15. Phosphorylated by ARK1.

Its subcellular location is the cell membrane. It is found in the endosome membrane. The protein localises to the cytoplasm. It localises to the cytoskeleton. The protein resides in the actin patch. Component of the PAN1 actin cytoskeleton-regulatory complex required for the internalization of endosomes during actin-coupled endocytosis. The complex links the site of endocytosis to the cell membrane-associated actin cytoskeleton. Mediates uptake of external molecules and vacuolar degradation of plasma membrane proteins. Plays a role in the proper organization of the cell membrane-associated actin cytoskeleton and promotes its destabilization. This is Actin cytoskeleton-regulatory complex protein PAN1 (PAN1) from Saccharomyces cerevisiae (strain YJM789) (Baker's yeast).